Reading from the N-terminus, the 394-residue chain is Elongation factor Tu (394 aa).

A tr-type G domain is found at 10–204 (KPHVNVGTIG…ALDTYIPEPE (195 aa)). The tract at residues 19–26 (GHVDHGKT) is G1. 19 to 26 (GHVDHGKT) is a binding site for GTP. T26 provides a ligand contact to Mg(2+). A G2 region spans residues 60-64 (GITIA). The G3 stretch occupies residues 81 to 84 (DCPG). GTP-binding positions include 81-85 (DCPGH) and 136-139 (NKCD). The G4 stretch occupies residues 136 to 139 (NKCD). Positions 174-176 (SAL) are G5.

Belongs to the TRAFAC class translation factor GTPase superfamily. Classic translation factor GTPase family. EF-Tu/EF-1A subfamily. As to quaternary structure, monomer.

It is found in the cytoplasm. The enzyme catalyses GTP + H2O = GDP + phosphate + H(+). Functionally, GTP hydrolase that promotes the GTP-dependent binding of aminoacyl-tRNA to the A-site of ribosomes during protein biosynthesis. In Vibrio parahaemolyticus serotype O3:K6 (strain RIMD 2210633), this protein is Elongation factor Tu.